The chain runs to 155 residues: Regulatory protein RecX (155 aa).

This sequence belongs to the RecX family.

It is found in the cytoplasm. Modulates RecA activity. The polypeptide is Regulatory protein RecX (Pseudomonas fluorescens (strain SBW25)).